The sequence spans 222 residues: L-cystine transport system permease protein TcyL (222 aa).

Residues 1-22 (MQESIQLVIDSLPFLLKGAGYT) lie on the Periplasmic side of the membrane. In terms of domain architecture, ABC transmembrane type-1 spans 19 to 207 (AGYTLQLSIG…IMATVLSTLQ (189 aa)). Residues 23–43 (LQLSIGGMFFGLLLGFILALM) traverse the membrane as a helical segment. Topologically, residues 44–64 (RLSPIWPVRWLARFYISIFRG) are cytoplasmic. Residues 65-85 (TPLIAQLFMIYYGLPQFGIEL) traverse the membrane as a helical segment. Topologically, residues 86–182 (DPIPSAMIGL…RQAQLITSRT (97 aa)) are periplasmic. Residues 183-203 (LEVFTMYLAASLIYWIMATVL) traverse the membrane as a helical segment. The Cytoplasmic segment spans residues 204–222 (STLQNHFENQLNRQEREPK).

Belongs to the binding-protein-dependent transport system permease family. HisMQ subfamily. The complex is composed of two ATP-binding proteins (TcyN), two transmembrane proteins (TcyL) and a solute-binding protein (TcyJ).

The protein resides in the cell inner membrane. Its function is as follows. Part of the ABC transporter complex TcyJLN involved in L-cystine import. Responsible for the translocation of the substrate across the membrane. In Escherichia coli O6:H1 (strain CFT073 / ATCC 700928 / UPEC), this protein is L-cystine transport system permease protein TcyL.